The primary structure comprises 204 residues: Ribosome maturation factor RimP (204 aa).

This sequence belongs to the RimP family.

The protein localises to the cytoplasm. In terms of biological role, required for maturation of 30S ribosomal subunits. The chain is Ribosome maturation factor RimP from Allorhizobium ampelinum (strain ATCC BAA-846 / DSM 112012 / S4) (Agrobacterium vitis (strain S4)).